Consider the following 1176-residue polypeptide: Serine/threonine-protein kinase pakF (1176 aa).

Composition is skewed to low complexity over residues 1–19 (MSNL…ESSS) and 32–52 (NLLN…SGSN). Disordered regions lie at residues 1–231 (MSNL…HESR) and 254–361 (LPST…KKTK). The span at 64–76 (QLPPNYTPPPPPH) shows a compositional bias: pro residues. Positions 92–133 (LNNENSDNNNNNNNNNNNNNNNNNNNNNNNNNNNEQLARTES) form a coiled coil. Composition is skewed to low complexity over residues 93–125 (NNEN…NNNN), 133–148 (SSVS…SNSG), and 156–172 (SSNI…ETYS). A compositionally biased stretch (polar residues) spans 173–197 (MSPNQTLNSNIDSSEQQHQDLSSSV). Low complexity predominate over residues 198–226 (NNNNNNNNNNNNNNNNNNNNNNNNNNNNN). Positions 254–289 (LPSTPTQQNVEIQTTNGGSSETSPNGLISPRPSNDQ) are enriched in polar residues. Over residues 316-353 (SLSSSTTTPSTTSSLTSSPSSSSLAISSPNTTAATTTN) the composition is skewed to low complexity. One can recognise a CRIB domain in the interval 370 to 383 (ISVPYNVIHKMHVD). Residues 394–646 (FILDEKLGDG…PIDLLCHPFL (253 aa)) enclose the Protein kinase domain. ATP-binding positions include 400–408 (LGDGAYGSV) and Lys423. The active-site Proton acceptor is the Asp514. Disordered stretches follow at residues 670–723 (IDDL…SDEL), 753–885 (QEEE…GNNL), 968–1083 (HTTS…TGRA), and 1112–1176 (NSNS…NIKK). Composition is skewed to low complexity over residues 682-693 (SQSSSSSSPQSP) and 710-720 (SIISPIPSSPS). 2 stretches are compositionally biased toward acidic residues: residues 767–789 (DEQD…EDVD) and 813–844 (DQDD…DEEI). Residues 812-873 (SDQDDEEEDE…NKKKNKKNNL (62 aa)) adopt a coiled-coil conformation. The segment covering 852–870 (VRKKKNKSTKKSNKKKNKK) has biased composition (basic residues). Composition is skewed to polar residues over residues 873-884 (LSTIGKSGSGNN) and 968-985 (HTTS…ATNL). 3 stretches are compositionally biased toward low complexity: residues 991 to 1044 (SSSP…RPNS), 1051 to 1066 (NNSS…SSSS), and 1148 to 1176 (SSGS…NIKK).

It belongs to the protein kinase superfamily. STE Ser/Thr protein kinase family. STE20 subfamily. It depends on Mg(2+) as a cofactor.

It carries out the reaction L-seryl-[protein] + ATP = O-phospho-L-seryl-[protein] + ADP + H(+). It catalyses the reaction L-threonyl-[protein] + ATP = O-phospho-L-threonyl-[protein] + ADP + H(+). This Dictyostelium discoideum (Social amoeba) protein is Serine/threonine-protein kinase pakF.